The primary structure comprises 462 residues: Calcitonin gene-related peptide type 1 receptor (462 aa).

Positions 1 to 22 (MEKKYILYFLFLLPFFMILVIA) are cleaved as a signal peptide. Residues 23 to 140 (ETEEENPDDL…NTHEKVQTAL (118 aa)) lie on the Extracellular side of the membrane. 3 cysteine pairs are disulfide-bonded: Cys-49-Cys-75, Cys-66-Cys-106, and Cys-89-Cys-128. Asn-67, Asn-119, and Asn-124 each carry an N-linked (GlcNAc...) asparagine glycan. A helical transmembrane segment spans residues 141-165 (NLFYLTIIGHGLSIASLLISLGIFF). The Cytoplasmic portion of the chain corresponds to 166 to 176 (YFKSLSCQRIT). Residues 177–199 (LHKNLFFSFVCNSIVTIIHLTAV) form a helical membrane-spanning segment. The Extracellular portion of the chain corresponds to 200-210 (ANNQALVATNP). A helical membrane pass occupies residues 211–239 (VSCKVFQFIHLYLMGCNYFWMLCEGIYLH). Over 240–253 (TLIVVAVFAEKQHL) the chain is Cytoplasmic. The helical transmembrane segment at 254-274 (MWYYFLGWGFPLIPACIHAVA) threads the bilayer. The Extracellular portion of the chain corresponds to 275–290 (RRLYYNDNCWISSDTH). Positions 289 to 290 (TH) are required for RAMP3 interaction. Residues 291-315 (LLYIIHGPICAALLVNLFFLLNIVR) traverse the membrane as a helical segment. The Cytoplasmic portion of the chain corresponds to 316 to 330 (VLITKLKVTHQAESN). A helical transmembrane segment spans residues 331–352 (LYMKAVRATLILVPLLGIEFVL). Residues 353-367 (IPWRPEGKIAEEVYD) lie on the Extracellular side of the membrane. A helical membrane pass occupies residues 368–388 (YIMHILVHYQGLLVSTIYCFF). Topologically, residues 389-462 (NGEVQAILRR…IVIKPEKLYD (74 aa)) are cytoplasmic. Residues Ser-421 and Ser-446 each carry the phosphoserine modification.

The protein belongs to the G-protein coupled receptor 2 family. In terms of assembly, heterodimer of CALCRL and RAMP1; the receptor complex functions as CGRP receptor. Heterodimer of CALCRL and RAMP2 or CALCRL and RAMP3; the complexes function as adrenomedullin receptor. Detected in lung and coronary artery.

Its subcellular location is the cell membrane. In terms of biological role, g protein-coupled receptor which specificity is determined by its interaction with receptor-activity-modifying proteins (RAMPs). Together with RAMP1, form the receptor complex for calcitonin-gene-related peptides CALCA/CGRP1 and CALCB/CGRP2. Together with RAMP2 or RAMP3, function as receptor complexes for adrenomedullin (ADM and ADM2). Ligand binding causes a conformation change that triggers signaling via guanine nucleotide-binding proteins (G proteins) and modulates the activity of downstream effectors. Activates cAMP-dependent pathway. In Sus scrofa (Pig), this protein is Calcitonin gene-related peptide type 1 receptor (CALCRL).